The sequence spans 432 residues: Adenylosuccinate synthetase (432 aa).

Residues 13–19 and 41–43 contribute to the GTP site; these read GDEGKGK and GHT. Residue D14 is the Proton acceptor of the active site. Mg(2+)-binding residues include D14 and G41. IMP-binding positions include 14–17, 39–42, T130, R144, Q225, T240, and R304; these read DEGK and NAGH. H42 acts as the Proton donor in catalysis. Position 300-306 (300-306) interacts with substrate; sequence ATTGRRR. GTP is bound by residues R306, 332–334, and 415–417; these read KLD and STG.

This sequence belongs to the adenylosuccinate synthetase family. In terms of assembly, homodimer. Requires Mg(2+) as cofactor.

The protein localises to the cytoplasm. It carries out the reaction IMP + L-aspartate + GTP = N(6)-(1,2-dicarboxyethyl)-AMP + GDP + phosphate + 2 H(+). The protein operates within purine metabolism; AMP biosynthesis via de novo pathway; AMP from IMP: step 1/2. Functionally, plays an important role in the de novo pathway of purine nucleotide biosynthesis. Catalyzes the first committed step in the biosynthesis of AMP from IMP. This Salmonella heidelberg (strain SL476) protein is Adenylosuccinate synthetase.